Reading from the N-terminus, the 234-residue chain is MAERGYSFSLTTFSPSGKLVQIEYALAAVAAGAPSVGIKATNGVVLATEKKQKSILYDEQSAHKVEPITKHIGMVYSGMGPDYRVLVRRARKLAQQYYLVYQEPIPTAQLVQRVASVMQEYTQSGGVRPFGVSLLIAGWDEGRPYLFQSDPSGAYFAWKATAMGKNYVNGKTFLEKRYNEDLELEDAIHTAILTLKESFEGQMTEDNIEVGICNEAGFKRLTPAEVKDYLAAIA.

At alanine 2 the chain carries N-acetylalanine. Tyrosine 121 carries the phosphotyrosine modification.

This sequence belongs to the peptidase T1A family. In terms of assembly, the 26S proteasome consists of a 20S proteasome core and two 19S regulatory subunits. The 20S proteasome core is a barrel-shaped complex made of 28 subunits that are arranged in four stacked rings. The two outer rings are each formed by seven alpha subunits, and the two inner rings are formed by seven beta subunits. The proteolytic activity is exerted by three beta-subunits PSMB5, PSMB6 and PSMB7.

Its subcellular location is the cytoplasm. It is found in the nucleus. Functionally, component of the 20S core proteasome complex involved in the proteolytic degradation of most intracellular proteins. This complex plays numerous essential roles within the cell by associating with different regulatory particles. Associated with two 19S regulatory particles, forms the 26S proteasome and thus participates in the ATP-dependent degradation of ubiquitinated proteins. The 26S proteasome plays a key role in the maintenance of protein homeostasis by removing misfolded or damaged proteins that could impair cellular functions, and by removing proteins whose functions are no longer required. Associated with the PA200 or PA28, the 20S proteasome mediates ubiquitin-independent protein degradation. This type of proteolysis is required in several pathways including spermatogenesis (20S-PA200 complex) or generation of a subset of MHC class I-presented antigenic peptides (20S-PA28 complex). The sequence is that of Proteasome subunit alpha type-2 (psma2) from Xenopus laevis (African clawed frog).